A 213-amino-acid polypeptide reads, in one-letter code: Chloramphenicol acetyltransferase 2 (213 aa).

Catalysis depends on His-189, which acts as the Proton acceptor.

It belongs to the chloramphenicol acetyltransferase family. As to quaternary structure, homotrimer.

It carries out the reaction chloramphenicol + acetyl-CoA = chloramphenicol 3-acetate + CoA. In terms of biological role, this enzyme is an effector of chloramphenicol resistance in bacteria. The polypeptide is Chloramphenicol acetyltransferase 2 (cmlA) (Escherichia coli).